The primary structure comprises 423 residues: tRNA(Ile)-lysidine synthase (423 aa).

27 to 32 (SGGVDS) contacts ATP.

The protein belongs to the tRNA(Ile)-lysidine synthase family.

The protein localises to the cytoplasm. The catalysed reaction is cytidine(34) in tRNA(Ile2) + L-lysine + ATP = lysidine(34) in tRNA(Ile2) + AMP + diphosphate + H(+). Ligates lysine onto the cytidine present at position 34 of the AUA codon-specific tRNA(Ile) that contains the anticodon CAU, in an ATP-dependent manner. Cytidine is converted to lysidine, thus changing the amino acid specificity of the tRNA from methionine to isoleucine. This is tRNA(Ile)-lysidine synthase from Streptococcus mutans serotype c (strain ATCC 700610 / UA159).